Consider the following 216-residue polypeptide: MGWIRGRRPRHNLEMSEFHNYKLGLAKSDFSTRCQKQRCPVIKSKCRENASPLFFCCFIAVAMGIRFIIMVTIWSAVFLNSLFNQEVQIPLTESYCGPCPKNWICYKNNCYQFFNESKNWYESQASCMSQNASLLKVYSKEDQDLLKLVKSYHWMGLVHIPTNGSWQWEDGSILSPNLLTIIEMQKGDCALYASSFKGYIENCSIPNTYICMQRTV.

Over 1-51 (MGWIRGRRPRHNLEMSEFHNYKLGLAKSDFSTRCQKQRCPVIKSKCRENAS) the chain is Cytoplasmic. The chain crosses the membrane as a helical; Signal-anchor for type II membrane protein span at residues 52 to 72 (PLFFCCFIAVAMGIRFIIMVT). Residues 73–216 (IWSAVFLNSL…NTYICMQRTV (144 aa)) are Extracellular-facing. Cystine bridges form between cysteine 96–cysteine 105 and cysteine 99–cysteine 110. The C-type lectin domain occupies 98-213 (PCPKNWICYK…SIPNTYICMQ (116 aa)). N-linked (GlcNAc...) asparagine glycosylation is found at asparagine 115, asparagine 131, asparagine 163, and asparagine 202. 2 disulfides stabilise this stretch: cysteine 127–cysteine 211 and cysteine 189–cysteine 203.

Homodimer; disulfide-linked. Heterohexamer composed of two subunits of KLRK1 and four subunits of HCST/DAP10. Interacts (via transmembrane domain) with HCST/DAP10 (via transmembrane domain); the interaction is required for KLRK1 NK cell surface and induces NK cell-mediated cytotoxicity. Can form disulfide-bonded heterodimer with CD94. Interacts with CEACAM1; recruits PTPN6 that dephosphorylates VAV1. As to expression, natural killer cells.

It is found in the cell membrane. Functionally, functions as an activating and costimulatory receptor involved in immunosurveillance upon binding to various cellular stress-inducible ligands displayed at the surface of autologous tumor cells and virus-infected cells. Provides both stimulatory and costimulatory innate immune responses on activated killer (NK) cells, leading to cytotoxic activity. Acts as a costimulatory receptor for T-cell receptor (TCR) in CD8(+) T-cell-mediated adaptive immune responses by amplifying T-cell activation. Stimulates perforin-mediated elimination of ligand-expressing tumor cells. Signaling involves calcium influx, culminating in the expression of TNF-alpha. Participates in NK cell-mediated bone marrow graft rejection. May play a regulatory role in differentiation and survival of NK cells. Binds to ligands belonging to various subfamilies of MHC class I-related glycoproteins. This chain is NKG2-D type II integral membrane protein (KLRK1), found in Macaca fascicularis (Crab-eating macaque).